We begin with the raw amino-acid sequence, 557 residues long: MSYNRRSKNITQGVARSPNRSMYYALGYQKDDFDKPMIGVANGHSTITPCNAGLQRLVDAAVSAVKQADANPQTFGTPTISDGMSMGTEGMKYSLVSREVIADCIETCVQGQWMDGVVVVGGCDKNMPGGMIALARINVPGIYVYGGTIRPGHWKGKDLTIVSAFEAVGEFTAGRMSQEDFEGVEKNACPTTGSCGGMYTANTMSSSFEALGMSLLYSSTMANPDQEKVDSAAESARVLVEAVKKDLKPRDIITKQAIENAVSVIMATGGSTNAVLHYLAIAHAAEIDWSIEDFERIRKRVPVICDLKPSGQYVATDLHAAGGIPQVMKLLLDAGLLHGDCMTITGRTIAEELKDVPSVPRADQKVIYPIDQALYKEGHLAILKGNLAEDGAVAKITGLKNPVITGPARVFDDEQSALAAILDDKIRAGDVVVLRYLGPQGGPGMPEMLAPTSAIIGKGLGESVGLITDGRFSGGTWGMVVGHVAPEAFVGGTIALVQEGDSITIDAHKLLLQLNVDDAELARRRAAWKQPAPRYTRGVLAKYAALARPANKGAVTG.

Cysteine 50 serves as a coordination point for [2Fe-2S] cluster. A Mg(2+)-binding site is contributed by aspartate 82. Position 123 (cysteine 123) interacts with [2Fe-2S] cluster. Residues aspartate 124 and lysine 125 each contribute to the Mg(2+) site. Lysine 125 carries the post-translational modification N6-carboxylysine. Cysteine 195 contacts [2Fe-2S] cluster. Glutamate 447 contacts Mg(2+). Serine 473 acts as the Proton acceptor in catalysis.

This sequence belongs to the IlvD/Edd family. As to quaternary structure, homodimer. [2Fe-2S] cluster is required as a cofactor. It depends on Mg(2+) as a cofactor.

The enzyme catalyses (2R)-2,3-dihydroxy-3-methylbutanoate = 3-methyl-2-oxobutanoate + H2O. The catalysed reaction is (2R,3R)-2,3-dihydroxy-3-methylpentanoate = (S)-3-methyl-2-oxopentanoate + H2O. Its pathway is amino-acid biosynthesis; L-isoleucine biosynthesis; L-isoleucine from 2-oxobutanoate: step 3/4. It participates in amino-acid biosynthesis; L-valine biosynthesis; L-valine from pyruvate: step 3/4. Its function is as follows. Functions in the biosynthesis of branched-chain amino acids. Catalyzes the dehydration of (2R,3R)-2,3-dihydroxy-3-methylpentanoate (2,3-dihydroxy-3-methylvalerate) into 2-oxo-3-methylpentanoate (2-oxo-3-methylvalerate) and of (2R)-2,3-dihydroxy-3-methylbutanoate (2,3-dihydroxyisovalerate) into 2-oxo-3-methylbutanoate (2-oxoisovalerate), the penultimate precursor to L-isoleucine and L-valine, respectively. This Burkholderia thailandensis (strain ATCC 700388 / DSM 13276 / CCUG 48851 / CIP 106301 / E264) protein is Dihydroxy-acid dehydratase.